The primary structure comprises 338 residues: Ketol-acid reductoisomerase (NADP(+)) (338 aa).

The KARI N-terminal Rossmann domain maps to 1–181; that stretch reads MKVFYDKDCD…GGGRTGIIET (181 aa). NADP(+)-binding positions include 24–27, Arg47, Ser50, Thr52, and 82–85; these read YGSQ and DEFQ. Residue His107 is part of the active site. Gly133 contacts NADP(+). The region spanning 182 to 327 is the KARI C-terminal knotted domain; sequence TFKDETETDL…EKLRSMMPWI (146 aa). Mg(2+) is bound by residues Asp190, Glu194, Glu226, and Glu230. Ser251 lines the substrate pocket.

The protein belongs to the ketol-acid reductoisomerase family. The cofactor is Mg(2+).

It carries out the reaction (2R)-2,3-dihydroxy-3-methylbutanoate + NADP(+) = (2S)-2-acetolactate + NADPH + H(+). The catalysed reaction is (2R,3R)-2,3-dihydroxy-3-methylpentanoate + NADP(+) = (S)-2-ethyl-2-hydroxy-3-oxobutanoate + NADPH + H(+). It functions in the pathway amino-acid biosynthesis; L-isoleucine biosynthesis; L-isoleucine from 2-oxobutanoate: step 2/4. It participates in amino-acid biosynthesis; L-valine biosynthesis; L-valine from pyruvate: step 2/4. Involved in the biosynthesis of branched-chain amino acids (BCAA). Catalyzes an alkyl-migration followed by a ketol-acid reduction of (S)-2-acetolactate (S2AL) to yield (R)-2,3-dihydroxy-isovalerate. In the isomerase reaction, S2AL is rearranged via a Mg-dependent methyl migration to produce 3-hydroxy-3-methyl-2-ketobutyrate (HMKB). In the reductase reaction, this 2-ketoacid undergoes a metal-dependent reduction by NADPH to yield (R)-2,3-dihydroxy-isovalerate. This Pseudomonas syringae pv. tomato (strain ATCC BAA-871 / DC3000) protein is Ketol-acid reductoisomerase (NADP(+)).